We begin with the raw amino-acid sequence, 182 residues long: Adenylate kinase (182 aa).

An ATP-binding site is contributed by 12–17; that stretch reads GAGKGT. The segment at 32 to 61 is NMP; it reads STGDLLRAEVKAGSELGKEAEAVMNRGELV. AMP contacts are provided by residues Thr33, Arg38, 59–61, 85–88, and Gln92; these read ELV and GFPR. The tract at residues 126 to 132 is LID; the sequence is ARGRADD. Arg127 is an ATP binding site. Residues Arg129 and Arg140 each coordinate AMP. Gly168 contacts ATP.

This sequence belongs to the adenylate kinase family. In terms of assembly, monomer.

The protein resides in the cytoplasm. The enzyme catalyses AMP + ATP = 2 ADP. It functions in the pathway purine metabolism; AMP biosynthesis via salvage pathway; AMP from ADP: step 1/1. In terms of biological role, catalyzes the reversible transfer of the terminal phosphate group between ATP and AMP. Plays an important role in cellular energy homeostasis and in adenine nucleotide metabolism. The polypeptide is Adenylate kinase (Synechococcus sp. (strain RCC307)).